The following is a 617-amino-acid chain: Probable endochitinase (617 aa).

A GH18 domain is found at 53-426 (YIRPCYFTNW…SVIAKELGGV (374 aa)). Cys57 and Cys82 form a disulfide bridge. Chitin-binding positions include 109 to 110 (DW) and 136 to 139 (GGWS). The active-site Proton donor is the Glu179. Chitin-binding positions include Tyr180 and 245–248 (MSYD). Residue Asn310 is glycosylated (N-linked (GlcNAc...) asparagine). Position 394 (Trp394) interacts with chitin. Chitin-binding type-2 domains follow at residues 478–534 (TNVC…GCSV) and 563–617 (AFKC…KCAK). 2 cysteine pairs are disulfide-bonded: Cys511–Cys524 and Cys594–Cys607.

The protein belongs to the glycosyl hydrolase 18 family. Chitinase class II subfamily.

The enzyme catalyses Random endo-hydrolysis of N-acetyl-beta-D-glucosaminide (1-&gt;4)-beta-linkages in chitin and chitodextrins.. The protein is Probable endochitinase (cht-1) of Caenorhabditis elegans.